Here is a 33-residue protein sequence, read N- to C-terminus: Brevinin-2Ef (33 aa).

Cys-27 and Cys-33 are oxidised to a cystine.

As to expression, expressed by the skin glands.

The protein resides in the secreted. In terms of biological role, shows antibacterial activity against representative Gram-negative and Gram-positive bacterial species, and hemolytic activity. The protein is Brevinin-2Ef of Pelophylax ridibundus (Marsh frog).